The sequence spans 475 residues: Maintenance of mitochondrial morphology protein 1 (475 aa).

Residues 1–14 (MSETFSPNLTFTEG) lie on the Lumenal side of the membrane. The chain crosses the membrane as a helical span at residues 15-35 (FVLGQASFLIILLLFIRYVVF). Topologically, residues 36–475 (SPSEQIDHEG…VTPGQVGTSR (440 aa)) are cytoplasmic. Residues 80–278 (PAESSDWVNV…HPNHISLALP (199 aa)) enclose the SMP-LTD domain. Disordered regions lie at residues 321-381 (NPVE…GQPQ) and 394-475 (SYPH…GTSR). Residues 341-351 (PPTPLVQPPGT) show a composition bias toward pro residues. Polar residues-rich tracts occupy residues 353–380 (PTLS…QGQP) and 394–403 (SYPHYNTYTL). The span at 442–464 (STTSSLTPSQSQSQFRFRGQFAS) shows a compositional bias: low complexity.

It belongs to the MMM1 family. Homodimer. Component of the ER-mitochondria encounter structure (ERMES) or MDM complex, composed of MMM1, MDM10, MDM12 and MDM34. An MMM1 homodimer associates with one molecule of MDM12 on each side in a pairwise head-to-tail manner, and the SMP-LTD domains of MMM1 and MDM12 generate a continuous hydrophobic tunnel for phospholipid trafficking.

The protein localises to the endoplasmic reticulum membrane. In terms of biological role, component of the ERMES/MDM complex, which serves as a molecular tether to connect the endoplasmic reticulum (ER) and mitochondria. Components of this complex are involved in the control of mitochondrial shape and protein biogenesis, and function in nonvesicular lipid trafficking between the ER and mitochondria. The MDM12-MMM1 subcomplex functions in the major beta-barrel assembly pathway that is responsible for biogenesis of all outer membrane beta-barrel proteins, and acts in a late step after the SAM complex. The MDM10-MDM12-MMM1 subcomplex further acts in the TOM40-specific pathway after the action of the MDM12-MMM1 complex. Essential for establishing and maintaining the structure of mitochondria and maintenance of mtDNA nucleoids. In Cryptococcus neoformans var. neoformans serotype D (strain B-3501A) (Filobasidiella neoformans), this protein is Maintenance of mitochondrial morphology protein 1.